Here is a 419-residue protein sequence, read N- to C-terminus: Mitochondrial chaperone BCS1 (419 aa).

The Mitochondrial intermembrane portion of the chain corresponds to 1 to 15 (MPLSDFVLALKDNPY). Residues 16-32 (FGAGFGLVGVGTALALA) traverse the membrane as a helical segment. The Mitochondrial matrix segment spans residues 33-419 (RKGAQLGLVA…AIQNAESLRR (387 aa)). At tyrosine 181 the chain carries Phosphotyrosine. 230–237 (GPPGCGKS) contributes to the ATP binding site.

The protein belongs to the AAA ATPase family. BCS1 subfamily. In terms of assembly, interacts with LETM1.

It is found in the mitochondrion inner membrane. It catalyses the reaction ATP + H2O = ADP + phosphate + H(+). In terms of biological role, chaperone necessary for the incorporation of Rieske iron-sulfur protein UQCRFS1 into the mitochondrial respiratory chain complex III. Plays an important role in the maintenance of mitochondrial tubular networks, respiratory chain assembly and formation of the LETM1 complex. In Bos taurus (Bovine), this protein is Mitochondrial chaperone BCS1 (BCS1L).